Reading from the N-terminus, the 342-residue chain is S-adenosylmethionine:tRNA ribosyltransferase-isomerase (342 aa).

Belongs to the QueA family. In terms of assembly, monomer.

It is found in the cytoplasm. The enzyme catalyses 7-aminomethyl-7-carbaguanosine(34) in tRNA + S-adenosyl-L-methionine = epoxyqueuosine(34) in tRNA + adenine + L-methionine + 2 H(+). It participates in tRNA modification; tRNA-queuosine biosynthesis. In terms of biological role, transfers and isomerizes the ribose moiety from AdoMet to the 7-aminomethyl group of 7-deazaguanine (preQ1-tRNA) to give epoxyqueuosine (oQ-tRNA). This is S-adenosylmethionine:tRNA ribosyltransferase-isomerase from Streptococcus pyogenes serotype M1.